Reading from the N-terminus, the 530-residue chain is Polyprotein pp62 (530 aa).

This sequence belongs to the asfivirus polyprotein pp62 family. Monomer. Predominantly exists as a monomer, with very little dimers. Homodimerization seems to be linked to low pH. As to quaternary structure, homodimer; disulfide-linked. Homotrimer; disulfide-linked. Homohexamer. In terms of processing, monoubiquitinated in vitro by viral UBCv1. Specific enzymatic cleavages in vivo by the viral pS273R protease yield mature proteins.

The protein localises to the host cytoplasm. It localises to the host perinuclear region. It is found in the virion. In terms of biological role, essential for the correct assembly and maturation of the core of the virion. Functionally, component of the core shell. Binds to phosphatidylserine, which may enable the core shell binding with the inner membrane. Its function is as follows. Component of the core shell. Binds to phosphatidylserine and DNA, which may link the core shell to the inner membrane and to the viral nucleoid. Component of the core shell. In African swine fever virus (strain Badajoz 1971 Vero-adapted) (Ba71V), this protein is Polyprotein pp62.